The chain runs to 204 residues: Small ribosomal subunit protein uS7 (204 aa).

Position 1 is an N-acetylmethionine (methionine 1). N-acetylthreonine; in 40S ribosomal protein S5, N-terminally processed is present on threonine 2. Threonine 14 bears the Phosphothreonine mark. The residue at position 47 (lysine 47) is an N6-acetyllysine; alternate. Lysine 47 participates in a covalent cross-link: Glycyl lysine isopeptide (Lys-Gly) (interchain with G-Cter in SUMO2); alternate. At serine 142 the chain carries Phosphoserine.

Belongs to the universal ribosomal protein uS7 family. Component of the small ribosomal subunit. Part of the small subunit (SSU) processome, composed of more than 70 proteins and the RNA chaperone small nucleolar RNA (snoRNA) U3.

The protein localises to the cytoplasm. It is found in the nucleus. Its subcellular location is the nucleolus. Component of the small ribosomal subunit. The ribosome is a large ribonucleoprotein complex responsible for the synthesis of proteins in the cell. Part of the small subunit (SSU) processome, first precursor of the small eukaryotic ribosomal subunit. During the assembly of the SSU processome in the nucleolus, many ribosome biogenesis factors, an RNA chaperone and ribosomal proteins associate with the nascent pre-rRNA and work in concert to generate RNA folding, modifications, rearrangements and cleavage as well as targeted degradation of pre-ribosomal RNA by the RNA exosome. The sequence is that of Small ribosomal subunit protein uS7 (Rps5) from Rattus norvegicus (Rat).